We begin with the raw amino-acid sequence, 419 residues long: DNA ligase (419 aa).

Residues methionine 1–asparagine 120 form an NTD region. The tract at residues arginine 121–leucine 317 is AD domain. Glutamine 149, lysine 151, glutamate 203, and phenylalanine 232 together coordinate ATP. Lysine 151 (N6-AMP-lysine intermediate) is an active-site residue. Glutamate 203 serves as a coordination point for a divalent metal cation. Residue glutamate 291 participates in a divalent metal cation binding. ATP contacts are provided by isoleucine 294 and lysine 316. Positions lysine 318 to isoleucine 419 are OB domain.

Belongs to the ATP-dependent DNA ligase family. It depends on a divalent metal cation as a cofactor.

The protein resides in the virion. It catalyses the reaction ATP + (deoxyribonucleotide)n-3'-hydroxyl + 5'-phospho-(deoxyribonucleotide)m = (deoxyribonucleotide)n+m + AMP + diphosphate.. Very low-fidelity DNA ligase that seals nicks in double-stranded DNA during DNA repair. Together with the viral repair DNA polymerase X, fills the single nucleotide gaps generated by the AP endonuclease. It is not essential for viral replication and recombination. Displays a very low adenylation activity towards DNA with 3'-dideoxy- or 3'-amino-terminated nicks compared to regular nick DNA. This Ornithodoros (relapsing fever ticks) protein is DNA ligase (LIG).